We begin with the raw amino-acid sequence, 156 residues long: SsrA-binding protein (156 aa).

Belongs to the SmpB family.

It localises to the cytoplasm. Required for rescue of stalled ribosomes mediated by trans-translation. Binds to transfer-messenger RNA (tmRNA), required for stable association of tmRNA with ribosomes. tmRNA and SmpB together mimic tRNA shape, replacing the anticodon stem-loop with SmpB. tmRNA is encoded by the ssrA gene; the 2 termini fold to resemble tRNA(Ala) and it encodes a 'tag peptide', a short internal open reading frame. During trans-translation Ala-aminoacylated tmRNA acts like a tRNA, entering the A-site of stalled ribosomes, displacing the stalled mRNA. The ribosome then switches to translate the ORF on the tmRNA; the nascent peptide is terminated with the 'tag peptide' encoded by the tmRNA and targeted for degradation. The ribosome is freed to recommence translation, which seems to be the essential function of trans-translation. This is SsrA-binding protein from Shouchella clausii (strain KSM-K16) (Alkalihalobacillus clausii).